The sequence spans 347 residues: UDP-N-acetylenolpyruvoylglucosamine reductase (347 aa).

Residues 33–221 (AGGSAERIYL…SGAWFALPRD (189 aa)) enclose the FAD-binding PCMH-type domain. Arginine 180 is an active-site residue. Serine 250 acts as the Proton donor in catalysis. Residue glutamate 320 is part of the active site.

It belongs to the MurB family. The cofactor is FAD.

Its subcellular location is the cytoplasm. It carries out the reaction UDP-N-acetyl-alpha-D-muramate + NADP(+) = UDP-N-acetyl-3-O-(1-carboxyvinyl)-alpha-D-glucosamine + NADPH + H(+). It functions in the pathway cell wall biogenesis; peptidoglycan biosynthesis. Functionally, cell wall formation. In Nitrosospira multiformis (strain ATCC 25196 / NCIMB 11849 / C 71), this protein is UDP-N-acetylenolpyruvoylglucosamine reductase.